Here is a 705-residue protein sequence, read N- to C-terminus: Elongation factor G (705 aa).

A tr-type G domain is found at 7–287 (HLTRNIGIMA…YVCAFLPSPL (281 aa)). GTP-binding positions include 16–23 (AHIDAGKT), 84–88 (DTPGH), and 138–141 (NKMD). Residues 293–312 (VGTNPTTGAEEDRKPSEDEK) are disordered. Basic and acidic residues predominate over residues 302 to 312 (EEDRKPSEDEK).

Belongs to the TRAFAC class translation factor GTPase superfamily. Classic translation factor GTPase family. EF-G/EF-2 subfamily.

The protein localises to the cytoplasm. In terms of biological role, catalyzes the GTP-dependent ribosomal translocation step during translation elongation. During this step, the ribosome changes from the pre-translocational (PRE) to the post-translocational (POST) state as the newly formed A-site-bound peptidyl-tRNA and P-site-bound deacylated tRNA move to the P and E sites, respectively. Catalyzes the coordinated movement of the two tRNA molecules, the mRNA and conformational changes in the ribosome. This Phocaeicola vulgatus (strain ATCC 8482 / DSM 1447 / JCM 5826 / CCUG 4940 / NBRC 14291 / NCTC 11154) (Bacteroides vulgatus) protein is Elongation factor G.